The primary structure comprises 297 residues: N-acetylneuraminate lyase (297 aa).

Aceneuramate contacts are provided by S47 and T48. Y137 (proton donor) is an active-site residue. Residue K165 is the Schiff-base intermediate with substrate of the active site. Aceneuramate is bound by residues T167, G189, D191, E192, and S208.

Belongs to the DapA family. NanA subfamily. In terms of assembly, homotetramer.

The protein resides in the cytoplasm. It carries out the reaction aceneuramate = aldehydo-N-acetyl-D-mannosamine + pyruvate. The protein operates within amino-sugar metabolism; N-acetylneuraminate degradation; D-fructose 6-phosphate from N-acetylneuraminate: step 1/5. Functionally, catalyzes the reversible aldol cleavage of N-acetylneuraminic acid (sialic acid; Neu5Ac) to form pyruvate and N-acetylmannosamine (ManNAc) via a Schiff base intermediate. The protein is N-acetylneuraminate lyase of Enterobacter sp. (strain 638).